A 77-amino-acid polypeptide reads, in one-letter code: Serine protease inhibitor 3 (77 aa).

The N-terminal stretch at 1-17 (MMFTPLIVLTLLVLATA) is a signal peptide. Intrachain disulfides connect cysteine 21-cysteine 53, cysteine 30-cysteine 48, cysteine 33-cysteine 44, and cysteine 55-cysteine 68. Residues 21–74 (CGPNEQWSGCPKCELQSGESDKPCATICGEPKCYCSPDKYRRIPDGRCIRKIQC) enclose the TIL domain.

It localises to the secreted. Defends the organism against the host's proteinases. This chain is Serine protease inhibitor 3, found in Anisakis simplex (Herring worm).